The primary structure comprises 522 residues: 2-isopropylmalate synthase (522 aa).

The Pyruvate carboxyltransferase domain occupies 5–267 (VIIFDTTLRD…ETGINAKEIH (263 aa)). Mn(2+) is bound by residues Asp14, His202, His204, and Asn238. Residues 392–522 (QLQQLVVQSD…MHKNRELGGV (131 aa)) are regulatory domain.

It belongs to the alpha-IPM synthase/homocitrate synthase family. LeuA type 1 subfamily. In terms of assembly, homodimer. Mn(2+) is required as a cofactor.

It is found in the cytoplasm. The catalysed reaction is 3-methyl-2-oxobutanoate + acetyl-CoA + H2O = (2S)-2-isopropylmalate + CoA + H(+). It functions in the pathway amino-acid biosynthesis; L-leucine biosynthesis; L-leucine from 3-methyl-2-oxobutanoate: step 1/4. Functionally, catalyzes the condensation of the acetyl group of acetyl-CoA with 3-methyl-2-oxobutanoate (2-ketoisovalerate) to form 3-carboxy-3-hydroxy-4-methylpentanoate (2-isopropylmalate). The polypeptide is 2-isopropylmalate synthase (Shewanella sp. (strain MR-4)).